An 83-amino-acid polypeptide reads, in one-letter code: Cytochrome b559 subunit alpha (83 aa).

Residues 21-35 traverse the membrane as a helical segment; that stretch reads VIHSITIPSLFIAGW. Residue H23 coordinates heme.

It belongs to the PsbE/PsbF family. Heterodimer of an alpha subunit and a beta subunit. PSII is composed of 1 copy each of membrane proteins PsbA, PsbB, PsbC, PsbD, PsbE, PsbF, PsbH, PsbI, PsbJ, PsbK, PsbL, PsbM, PsbT, PsbX, PsbY, PsbZ, Psb30/Ycf12, at least 3 peripheral proteins of the oxygen-evolving complex and a large number of cofactors. It forms dimeric complexes. The cofactor is heme b.

Its subcellular location is the plastid. It is found in the chloroplast thylakoid membrane. Functionally, this b-type cytochrome is tightly associated with the reaction center of photosystem II (PSII). PSII is a light-driven water:plastoquinone oxidoreductase that uses light energy to abstract electrons from H(2)O, generating O(2) and a proton gradient subsequently used for ATP formation. It consists of a core antenna complex that captures photons, and an electron transfer chain that converts photonic excitation into a charge separation. In Helianthus annuus (Common sunflower), this protein is Cytochrome b559 subunit alpha.